A 196-amino-acid chain; its full sequence is MTRRAATVTRTTTETAISLSLTVDGKGEVSVTTGHGFTDHMLTLLGFWAGFDLTLTCNGDTHVDAHHTVEDAGLCLGQAFAQALGDRKGIARVGNARVPMDEALTEVDLDISGRPYLVYRGDELLPPVIAGDEADLWREFFKSFANGARINLHISLLYGKNGHHLLESAFKGLGLALRRAAACEREALLSTKGSLD.

Belongs to the imidazoleglycerol-phosphate dehydratase family.

The protein localises to the cytoplasm. The enzyme catalyses D-erythro-1-(imidazol-4-yl)glycerol 3-phosphate = 3-(imidazol-4-yl)-2-oxopropyl phosphate + H2O. It participates in amino-acid biosynthesis; L-histidine biosynthesis; L-histidine from 5-phospho-alpha-D-ribose 1-diphosphate: step 6/9. In Oleidesulfovibrio alaskensis (strain ATCC BAA-1058 / DSM 17464 / G20) (Desulfovibrio alaskensis), this protein is Imidazoleglycerol-phosphate dehydratase.